The primary structure comprises 131 residues: MIVRTTDEITGTERDVAGPGWRSKRIVLGGDGVGFSFHETTIDAGTTHEFHYVHHIEAVWLVEGEGTLTDLDNDQVYDLRPGTMYLLNGHEKHRVQARTTMRMMCVFNPPVTGQEVHDENGVYPLVAVPAS.

The protein belongs to the ectoine synthase family.

It carries out the reaction (2S)-4-acetamido-2-aminobutanoate = L-ectoine + H2O. It participates in amine and polyamine biosynthesis; ectoine biosynthesis; L-ectoine from L-aspartate 4-semialdehyde: step 3/3. In terms of biological role, catalyzes the circularization of gamma-N-acetyl-alpha,gamma-diaminobutyric acid (ADABA) to ectoine (1,4,5,6-tetrahydro-2-methyl-4-pyrimidine carboxylic acid), which is an excellent osmoprotectant. The sequence is that of L-ectoine synthase from Nocardia farcinica (strain IFM 10152).